The sequence spans 621 residues: Zinc metalloproteinase-disintegrin-like NaMP (621 aa).

A signal peptide spans 1–20 (MIQPLLVAICLVVFPYQGSS). Positions 21-188 (TILESGKVRD…GESDETIKKI (168 aa)) are excised as a propeptide. Residues 206–402 (KHIELYMVAD…KSAQCILNDP (197 aa)) form the Peptidase M12B domain. N-linked (GlcNAc...) asparagine glycosylation is found at N225, N268, and N319. 17 disulfides stabilise this stretch: C317/C397, C357/C381, C359/C364, C413/C442, C424/C437, C426/C432, C436/C459, C450/C456, C455/C481, C468/C488, C475/C507, C500/C512, C519/C569, C534/C579, C547/C557, C564/C605, and C599/C610. H342 serves as a coordination point for Zn(2+). E343 is a catalytic residue. Residues H346 and H352 each contribute to the Zn(2+) site. The 87-residue stretch at 410-496 (TAICGNGFVE…ECPMNHFHMN (87 aa)) folds into the Disintegrin domain. The D/ECD-tripeptide motif lies at 474–476 (DCD). The N-linked (GlcNAc...) asparagine glycan is linked to N551.

The protein belongs to the venom metalloproteinase (M12B) family. P-III subfamily. P-IIIa sub-subfamily. In terms of assembly, monomer. Requires Zn(2+) as cofactor. Expressed by the venom gland.

Its subcellular location is the secreted. Functionally, snake venom zinc metalloproteinase that inhibits platelet aggregation and degrades fibrinogen. The polypeptide is Zinc metalloproteinase-disintegrin-like NaMP (Naja atra (Chinese cobra)).